The sequence spans 271 residues: Colicin-M (271 aa).

Residues 2-9 carry the TonB box motif; sequence ETLTVHAP.

In terms of biological role, colicins are polypeptide toxins produced by and active against E.coli and closely related bacteria. Its function is as follows. This is a calcium-requiring inhibitor for murein biosynthesis; it causes lysis of sensitive cells accompanied by murein degradation. The target site is possibly the cytoplasmic membrane. This chain is Colicin-M (cma), found in Escherichia coli.